The primary structure comprises 379 residues: Cytochrome b (379 aa).

4 consecutive transmembrane segments (helical) span residues F33–M53, W77–V98, W113–L133, and F178–L198. Heme b-binding residues include H83 and H97. 2 residues coordinate heme b: H182 and H196. H201 provides a ligand contact to a ubiquinone. The next 4 membrane-spanning stretches (helical) occupy residues I226–F246, L288–N308, I320–G340, and F347–P367.

It belongs to the cytochrome b family. As to quaternary structure, the cytochrome bc1 complex contains 11 subunits: 3 respiratory subunits (MT-CYB, CYC1 and UQCRFS1), 2 core proteins (UQCRC1 and UQCRC2) and 6 low-molecular weight proteins (UQCRH/QCR6, UQCRB/QCR7, UQCRQ/QCR8, UQCR10/QCR9, UQCR11/QCR10 and a cleavage product of UQCRFS1). This cytochrome bc1 complex then forms a dimer. Requires heme b as cofactor.

It localises to the mitochondrion inner membrane. Component of the ubiquinol-cytochrome c reductase complex (complex III or cytochrome b-c1 complex) that is part of the mitochondrial respiratory chain. The b-c1 complex mediates electron transfer from ubiquinol to cytochrome c. Contributes to the generation of a proton gradient across the mitochondrial membrane that is then used for ATP synthesis. This is Cytochrome b (MT-CYB) from Akodon toba (Chaco grass mouse).